Reading from the N-terminus, the 120-residue chain is uncharacterized protein (120 aa).

To E.coli YiaW.

This is an uncharacterized protein from Escherichia coli (strain K12).